Reading from the N-terminus, the 728-residue chain is Catalase-peroxidase (728 aa).

The tryptophyl-tyrosyl-methioninium (Trp-Tyr) (with M-244) cross-link spans 91 to 218 (WHSAGTYRTA…LAAVQMGLIY (128 aa)). Catalysis depends on His92, which acts as the Proton acceptor. Residues 218–244 (YVNPEGPDGTPDPVAAAHDIRETFARM) constitute a cross-link (tryptophyl-tyrosyl-methioninium (Tyr-Met) (with W-91)). His259 serves as a coordination point for heme b.

This sequence belongs to the peroxidase family. Peroxidase/catalase subfamily. As to quaternary structure, homodimer or homotetramer. The cofactor is heme b. In terms of processing, formation of the three residue Trp-Tyr-Met cross-link is important for the catalase, but not the peroxidase activity of the enzyme.

It catalyses the reaction H2O2 + AH2 = A + 2 H2O. It carries out the reaction 2 H2O2 = O2 + 2 H2O. Functionally, bifunctional enzyme with both catalase and broad-spectrum peroxidase activity. The protein is Catalase-peroxidase of Burkholderia lata (strain ATCC 17760 / DSM 23089 / LMG 22485 / NCIMB 9086 / R18194 / 383).